The chain runs to 201 residues: Imidazoleglycerol-phosphate dehydratase (201 aa).

The protein belongs to the imidazoleglycerol-phosphate dehydratase family.

It is found in the cytoplasm. The catalysed reaction is D-erythro-1-(imidazol-4-yl)glycerol 3-phosphate = 3-(imidazol-4-yl)-2-oxopropyl phosphate + H2O. The protein operates within amino-acid biosynthesis; L-histidine biosynthesis; L-histidine from 5-phospho-alpha-D-ribose 1-diphosphate: step 6/9. The sequence is that of Imidazoleglycerol-phosphate dehydratase from Prochlorococcus marinus (strain MIT 9301).